We begin with the raw amino-acid sequence, 3767 residues long: Transmembrane cell adhesion receptor mua-3 (3767 aa).

An N-terminal signal peptide occupies residues 1 to 24; it reads MQAGISIFFLFLHIPIFFVNCSNS. Residues 25–3417 are Extracellular-facing; sequence TSCVAREEFQ…CQVAPSNASL (3393 aa). The 38-residue stretch at 26–63 folds into the LDL-receptor class A 1 domain; it reads SCVAREEFQCKMDDSCISMKKWQDGVDDCYDGSDEVCL. 10 disulfides stabilise this stretch: Cys27–Cys41, Cys35–Cys54, Cys62–Cys76, Cys69–Cys89, Cys97–Cys110, Cys104–Cys123, Cys131–Cys144, Cys138–Cys157, Cys165–Cys179, and Cys172–Cys192. LDL-receptor class A domains follow at residues 96–132, 133–166, and 167–209; these read GCPA…EPCA, QNQF…EECT, and TSQF…ANCT. 2 N-linked (GlcNAc...) asparagine glycosylation sites follow: Asn201 and Asn207. EGF-like domains are found at residues 225-268, 375-416, 418-466, 468-517, 519-566, 614-663, 665-713, 714-760, 762-810, 816-860, 861-908, 910-961, 963-1012, 1029-1070, 1071-1118, 1120-1168, and 1170-1219; these read KLKF…DKCI, NRDD…GTCR, LIDE…RKCR, LINE…RNCT, AINE…RKCV, RANP…RKCV, AVDE…RSCK, KADM…RVCR, VVNE…KNCV, DPPE…GRCV, VINE…RICR, RVNE…RRCI, AVNE…RICT, TDDG…GSCR, VYSA…RICK, LINE…RQCT, and SNNE…RVCT. Cystine bridges form between Cys229-Cys243, Cys235-Cys252, Cys254-Cys267, Cys381-Cys392, Cys386-Cys402, Cys404-Cys415, Cys422-Cys435, Cys429-Cys444, Cys446-Cys465, Cys472-Cys486, Cys480-Cys495, Cys497-Cys516, Cys523-Cys536, Cys530-Cys545, Cys547-Cys565, Cys618-Cys632, Cys626-Cys642, Cys644-Cys662, Cys669-Cys682, Cys676-Cys691, Cys693-Cys712, Cys718-Cys729, Cys723-Cys738, Cys740-Cys759, Cys766-Cys779, Cys773-Cys788, Cys790-Cys809, Cys820-Cys836, Cys828-Cys845, Cys847-Cys859, Cys865-Cys879, Cys873-Cys888, Cys890-Cys907, Cys914-Cys930, Cys924-Cys939, Cys941-Cys960, Cys967-Cys981, Cys975-Cys990, Cys992-Cys1011, Cys1033-Cys1046, Cys1040-Cys1055, Cys1057-Cys1069, Cys1075-Cys1087, Cys1081-Cys1096, Cys1098-Cys1117, Cys1124-Cys1137, Cys1131-Cys1146, Cys1148-Cys1167, Cys1174-Cys1188, Cys1182-Cys1197, and Cys1199-Cys1218. The N-linked (GlcNAc...) asparagine glycan is linked to Asn383. Residue Asn515 is glycosylated (N-linked (GlcNAc...) asparagine). The VWFA domain occupies 1230 to 1406; it reads DLVFLIDGSG…DLDTRLRSMI (177 aa). Asn1350 carries N-linked (GlcNAc...) asparagine glycosylation. EGF-like domains lie at 1421–1466, 1466–1510, 1521–1562, 1563–1608, 1608–1656, 1658–1706, 1708–1755, 1759–1807, 1809–1860, 1862–1911, 1913–1961, 1963–2011, 2014–2062, 2068–2112, 2113–2160, 2162–2208, 2210–2258, 2260–2308, 2310–2358, 2360–2408, 2409–2455, 2456–2504, 2513–2563, 2565–2616, 2618–2666, 2668–2714, 2716–2763, 2763–2811, and 2833–2872; these read SEDV…RVCG, GGDL…GFCV, HDAN…GQCA, YPGS…DICL, LKNE…RVCV, LQNE…MVCK, LVNE…RRCE, TNDK…RLCI, VIPE…RLCK, LQNE…RKCK, LINE…RRCL, RINE…RICR, LVDE…RLCQ, PPPE…GSCS, IINE…RMCK, MVNE…RICK, LTNE…RACR, LVNE…RVCL, FINE…RVCV, LVDE…RVCS, APEV…RVCV, RNNA…RVCE, PRHP…RLCV, TEPV…RICK, LINE…RICS, SVNE…HRCS, MINE…RICR, RLNE…RICI, and REFP…GKCQ. Intrachain disulfides connect Cys1425-Cys1441, Cys1433-Cys1450, Cys1452-Cys1465, Cys1470-Cys1484, Cys1478-Cys1494, Cys1496-Cys1509, Cys1525-Cys1538, Cys1532-Cys1547, Cys1549-Cys1561, Cys1567-Cys1583, Cys1575-Cys1592, Cys1594-Cys1607, Cys1612-Cys1625, Cys1619-Cys1634, Cys1636-Cys1655, Cys1662-Cys1675, Cys1669-Cys1684, Cys1686-Cys1705, Cys1712-Cys1726, Cys1720-Cys1735, Cys1737-Cys1754, Cys1763-Cys1776, Cys1770-Cys1786, Cys1788-Cys1806, Cys1813-Cys1829, Cys1821-Cys1838, Cys1840-Cys1859, Cys1866-Cys1880, Cys1873-Cys1889, Cys1891-Cys1910, Cys1917-Cys1930, Cys1924-Cys1939, Cys1941-Cys1960, Cys1967-Cys1980, Cys1974-Cys1989, Cys1991-Cys2010, Cys2018-Cys2031, Cys2025-Cys2040, Cys2042-Cys2061, Cys2072-Cys2088, Cys2080-Cys2097, Cys2099-Cys2111, Cys2117-Cys2131, Cys2125-Cys2140, Cys2142-Cys2159, Cys2166-Cys2180, Cys2174-Cys2189, Cys2191-Cys2207, Cys2214-Cys2228, Cys2222-Cys2237, Cys2239-Cys2257, Cys2264-Cys2278, Cys2272-Cys2287, Cys2289-Cys2307, Cys2314-Cys2327, Cys2321-Cys2336, Cys2338-Cys2357, Cys2364-Cys2377, Cys2371-Cys2386, Cys2388-Cys2407, Cys2413-Cys2425, Cys2419-Cys2435, Cys2437-Cys2454, Cys2460-Cys2474, Cys2468-Cys2483, and Cys2485-Cys2503. The interval 2492–2521 is disordered; sequence RSPDSSQRGRVCEPPPPPSPPPRHPCQDPE. Pro residues predominate over residues 2504–2515; the sequence is EPPPPPSPPPRH. 21 disulfide bridges follow: Cys2517/Cys2531, Cys2525/Cys2541, Cys2543/Cys2562, Cys2569/Cys2583, Cys2577/Cys2594, Cys2596/Cys2615, Cys2622/Cys2636, Cys2630/Cys2645, Cys2647/Cys2665, Cys2672/Cys2686, Cys2680/Cys2695, Cys2697/Cys2713, Cys2720/Cys2734, Cys2728/Cys2743, Cys2745/Cys2762, Cys2767/Cys2781, Cys2775/Cys2790, Cys2792/Cys2810, Cys2837/Cys2850, Cys2842/Cys2856, and Cys2858/Cys2871. The 127-residue stretch at 2873-2999 folds into the SEA 1 domain; sequence EVQETPFELR…GSLRVASDTD (127 aa). The N-linked (GlcNAc...) asparagine glycan is linked to Asn2944. Residues 3009-3048 form the EGF-like 47 domain; that stretch reads EWGNCGGMSCKEHLKEVCIAGHICGCPDGMKRRDANSECR. 3 disulfide bridges follow: Cys3013/Cys3026, Cys3018/Cys3032, and Cys3034/Cys3047. The SEA 2 domain maps to 3049–3174; it reads VVESWNVPLW…SELYLNPTQP (126 aa). Residues Asn3120 and Asn3130 are each glycosylated (N-linked (GlcNAc...) asparagine). EGF-like domains are found at residues 3176–3220, 3224–3272, and 3272–3324; these read PFNP…KKCL, GFNE…SLCV, and VLDY…TLCM. 15 cysteine pairs are disulfide-bonded: Cys3180–Cys3191, Cys3185–Cys3201, Cys3203–Cys3219, Cys3228–Cys3242, Cys3236–Cys3251, Cys3253–Cys3271, Cys3276–Cys3288, Cys3282–Cys3297, Cys3299–Cys3323, Cys3332–Cys3345, Cys3339–Cys3354, Cys3356–Cys3372, Cys3377–Cys3386, Cys3380–Cys3397, and Cys3399–Cys3408. Asn3285 carries an N-linked (GlcNAc...) asparagine glycan. Residues 3328 to 3373 form the EGF-like 51; calcium-binding domain; sequence DVDECALGLNNCSGVAHCIDRAVGYTCKCPDGYIDGNPDEPGRVCG. N-linked (GlcNAc...) asparagine; atypical glycosylation occurs at Asn3337. The N-linked (GlcNAc...) asparagine glycan is linked to Asn3338. An EGF-like 52 domain is found at 3373–3409; sequence GALLCDLCNAHGDCVHNTATNNITCVCTDGWTGPQCQ. Asn3394 is a glycosylation site (N-linked (GlcNAc...) asparagine). Asn3414 carries N-linked (GlcNAc...) asparagine glycosylation. Residues 3418–3438 traverse the membrane as a helical segment; that stretch reads VLLILLALLFLLLTLCCLLYF. Residues 3439 to 3767 lie on the Cytoplasmic side of the membrane; it reads CTKCHCFKGR…SQTSTHVTKK (329 aa). The tract at residues 3582 to 3729 is disordered; the sequence is TTTTDEQGNT…EEDVEHSVGD (148 aa). Positions 3588-3597 are enriched in polar residues; the sequence is QGNTIVTTTE. Over residues 3630 to 3665 the composition is skewed to low complexity; sequence QSQSQQQQSMSQGMSQSMSQHATSAGYSSSGMESSA. Residues 3675 to 3684 are compositionally biased toward basic and acidic residues; the sequence is HTGERERGGS. Positions 3690–3702 are enriched in low complexity; the sequence is IGRARGMAAASSG.

Expressed in the hypodermis at the sites of muscle contact, in striated muscles including body wall muscles, the anal sphincter muscles and the junctions between the anal sphincter muscle and rectal cuticle. Also expressed in non-muscle cells including the excretory duct cell and pore cells.

The protein resides in the cell membrane. Its subcellular location is the cell junction. It localises to the hemidesmosome. Involved in cell adhesion and required for organ positioning and attachment. At the hypodermal surface, required for attachment of the hypdermermis to the basal cuticle in postembryonic development, possibly through intermediate filaments of the cytoskeleton. The chain is Transmembrane cell adhesion receptor mua-3 from Caenorhabditis elegans.